We begin with the raw amino-acid sequence, 292 residues long: Protoheme IX farnesyltransferase (292 aa).

Transmembrane regions (helical) follow at residues 12 to 32 (ITWL…PQAS), 43 to 63 (LLRL…TAAL), 94 to 114 (LAFG…GVNL), 115 to 135 (LSAG…TPMK), 144 to 164 (VGAI…AGGL), 169 to 189 (WVLF…IAWM), 216 to 236 (IVIY…LGMS), 239 to 259 (LYLV…VRVA), and 267 to 287 (ARGV…LMLL).

Belongs to the UbiA prenyltransferase family. Protoheme IX farnesyltransferase subfamily.

It is found in the cell inner membrane. The catalysed reaction is heme b + (2E,6E)-farnesyl diphosphate + H2O = Fe(II)-heme o + diphosphate. The protein operates within porphyrin-containing compound metabolism; heme O biosynthesis; heme O from protoheme: step 1/1. Functionally, converts heme B (protoheme IX) to heme O by substitution of the vinyl group on carbon 2 of heme B porphyrin ring with a hydroxyethyl farnesyl side group. In Solibacter usitatus (strain Ellin6076), this protein is Protoheme IX farnesyltransferase.